The chain runs to 229 residues: MDQNKLKQEAAQRAAEFVEDGMTIGLGTGSTVVYLVEAIAQRIKDEHLNLTGVATSVRTRKQAESLGIPMKALDEVGQIDLTIDGADEVDKHFQGIKGGGRSHLIEKIVAINSARNIWIVDETKLVDTLGKFPLPLEVIPFGSGKLLQRLADEGLKPAYRLNEDGSKALTDSKNYIIDLHLGKIEHPHLLAEWLNKQVGIVEHGLFLDLVKTVVVGTTHGPEILDAHRG.

Substrate is bound by residues 28 to 31, 84 to 87, and 97 to 100; these read TGST, DGAD, and KGGG. The Proton acceptor role is filled by Glu106. Lys124 is a binding site for substrate.

It belongs to the ribose 5-phosphate isomerase family. As to quaternary structure, homodimer.

The enzyme catalyses aldehydo-D-ribose 5-phosphate = D-ribulose 5-phosphate. It functions in the pathway carbohydrate degradation; pentose phosphate pathway; D-ribose 5-phosphate from D-ribulose 5-phosphate (non-oxidative stage): step 1/1. Its function is as follows. Catalyzes the reversible conversion of ribose-5-phosphate to ribulose 5-phosphate. The protein is Ribose-5-phosphate isomerase A of Lacticaseibacillus paracasei (strain ATCC 334 / BCRC 17002 / CCUG 31169 / CIP 107868 / KCTC 3260 / NRRL B-441) (Lactobacillus paracasei).